A 311-amino-acid chain; its full sequence is NAD kinase (311 aa).

Catalysis depends on Asp-67, which acts as the Proton acceptor. Residues 67–68, Arg-72, 140–141, Arg-151, Asp-170, 181–186, and Gln-240 contribute to the NAD(+) site; these read DG, ND, and TAYSLS. A compositionally biased stretch (basic and acidic residues) spans 278–287; that stretch reads LKEGGSRQDD. Residues 278–311 form a disordered region; sequence LKEGGSRQDDENPAATVNPETDSKYPHSHPGSTG.

Belongs to the NAD kinase family. The cofactor is a divalent metal cation.

The protein resides in the cytoplasm. The enzyme catalyses NAD(+) + ATP = ADP + NADP(+) + H(+). In terms of biological role, involved in the regulation of the intracellular balance of NAD and NADP, and is a key enzyme in the biosynthesis of NADP. Catalyzes specifically the phosphorylation on 2'-hydroxyl of the adenosine moiety of NAD to yield NADP. In Moorella thermoacetica (strain ATCC 39073 / JCM 9320), this protein is NAD kinase.